Consider the following 411-residue polypeptide: Dual-specificity RNA methyltransferase RlmN (411 aa).

The active-site Proton acceptor is Glu-125. A Radical SAM core domain is found at 131–380; it reads EEGRGTLCIS…IRTPRGRDIL (250 aa). The cysteines at positions 138 and 383 are disulfide-linked. [4Fe-4S] cluster contacts are provided by Cys-145, Cys-149, and Cys-152. Residues 209–210, Ser-241, 263–265, and Asn-340 contribute to the S-adenosyl-L-methionine site; these read GE and SLH. Residue Cys-383 is the S-methylcysteine intermediate of the active site.

The protein belongs to the radical SAM superfamily. RlmN family. [4Fe-4S] cluster serves as cofactor.

It is found in the cytoplasm. The enzyme catalyses adenosine(2503) in 23S rRNA + 2 reduced [2Fe-2S]-[ferredoxin] + 2 S-adenosyl-L-methionine = 2-methyladenosine(2503) in 23S rRNA + 5'-deoxyadenosine + L-methionine + 2 oxidized [2Fe-2S]-[ferredoxin] + S-adenosyl-L-homocysteine. It carries out the reaction adenosine(37) in tRNA + 2 reduced [2Fe-2S]-[ferredoxin] + 2 S-adenosyl-L-methionine = 2-methyladenosine(37) in tRNA + 5'-deoxyadenosine + L-methionine + 2 oxidized [2Fe-2S]-[ferredoxin] + S-adenosyl-L-homocysteine. Its function is as follows. Specifically methylates position 2 of adenine 2503 in 23S rRNA and position 2 of adenine 37 in tRNAs. m2A2503 modification seems to play a crucial role in the proofreading step occurring at the peptidyl transferase center and thus would serve to optimize ribosomal fidelity. The chain is Dual-specificity RNA methyltransferase RlmN from Brucella melitensis biotype 2 (strain ATCC 23457).